Consider the following 175-residue polypeptide: ATP-dependent protease subunit HslV (175 aa).

Thr2 is a catalytic residue. Na(+) is bound by residues Gly158, Cys161, and Thr164.

Belongs to the peptidase T1B family. HslV subfamily. A double ring-shaped homohexamer of HslV is capped on each side by a ring-shaped HslU homohexamer. The assembly of the HslU/HslV complex is dependent on binding of ATP.

The protein resides in the cytoplasm. The enzyme catalyses ATP-dependent cleavage of peptide bonds with broad specificity.. Allosterically activated by HslU binding. In terms of biological role, protease subunit of a proteasome-like degradation complex believed to be a general protein degrading machinery. This chain is ATP-dependent protease subunit HslV, found in Haemophilus influenzae (strain 86-028NP).